The following is a 1040-amino-acid chain: Multidrug resistance protein MdtB (1040 aa).

12 helical membrane-spanning segments follow: residues 16-36, 342-362, 373-393, 396-416, 440-460, 472-492, 537-557, 865-885, 888-908, 911-931, 968-988, and 1002-1022; these read FILR…AGLV, DVQF…YLFL, IAVP…GFSV, LTLM…IVVI, IGFT…PLLF, FAVT…TLTP, WITL…YIVI, STIW…GVLY, FIHP…ALLA, ISGS…IGIV, ILMT…STGV, and GGLV…YLLF.

This sequence belongs to the resistance-nodulation-cell division (RND) (TC 2.A.6) family. MdtB subfamily. Part of a tripartite efflux system composed of MdtA, MdtB and MdtC. MdtB forms a heteromultimer with MdtC.

The protein localises to the cell inner membrane. The protein is Multidrug resistance protein MdtB of Musicola paradisiaca (strain Ech703) (Dickeya paradisiaca).